The sequence spans 150 residues: Centrin-B (150 aa).

3 EF-hand domains span residues 12–46 (DQIS…LGCE), 80–114 (DSMS…IGEE), and 115–150 (CSDS…KKVL). Residues aspartate 128, aspartate 130, aspartate 132, and glutamate 139 each coordinate Ca(2+).

It belongs to the centrin family.

It localises to the cytoplasm. The protein localises to the cytoskeleton. It is found in the microtubule organizing center. Its subcellular location is the centrosome. Its function is as follows. Plays a fundamental role in microtubule-organizing center structure and function. The polypeptide is Centrin-B (cenB) (Dictyostelium discoideum (Social amoeba)).